Here is a 1413-residue protein sequence, read N- to C-terminus: DNA-directed RNA polymerase subunit beta' (1413 aa).

Zn(2+)-binding residues include C70, C72, C85, and C88. Positions 460, 462, and 464 each coordinate Mg(2+). 4 residues coordinate Zn(2+): C819, C893, C900, and C903.

This sequence belongs to the RNA polymerase beta' chain family. In terms of assembly, the RNAP catalytic core consists of 2 alpha, 1 beta, 1 beta' and 1 omega subunit. When a sigma factor is associated with the core the holoenzyme is formed, which can initiate transcription. Mg(2+) serves as cofactor. Requires Zn(2+) as cofactor.

It catalyses the reaction RNA(n) + a ribonucleoside 5'-triphosphate = RNA(n+1) + diphosphate. In terms of biological role, DNA-dependent RNA polymerase catalyzes the transcription of DNA into RNA using the four ribonucleoside triphosphates as substrates. This Burkholderia multivorans (strain ATCC 17616 / 249) protein is DNA-directed RNA polymerase subunit beta'.